The primary structure comprises 714 residues: Glutamine-dependent NAD(+) synthetase (714 aa).

A CN hydrolase domain is found at 5-275; it reads ITLATCNLNQ…VEVVTATVDL (271 aa). Catalysis depends on Glu45, which acts as the Proton acceptor; for glutaminase activity. Catalysis depends on Lys114, which acts as the For glutaminase activity. The Nucleophile; for glutaminase activity role is filled by Cys175. The ligase stretch occupies residues 329–714; the sequence is YHSPEEEIAL…GSTLDIMSID (386 aa). 359–366 contacts ATP; the sequence is PLSGGIDS. Ser361 is a catalytic residue.

In the C-terminal section; belongs to the NAD synthetase family.

The catalysed reaction is deamido-NAD(+) + L-glutamine + ATP + H2O = L-glutamate + AMP + diphosphate + NAD(+) + H(+). Its pathway is cofactor biosynthesis; NAD(+) biosynthesis; NAD(+) from deamido-NAD(+) (L-Gln route): step 1/1. This Saccharomyces cerevisiae (strain ATCC 204508 / S288c) (Baker's yeast) protein is Glutamine-dependent NAD(+) synthetase (QNS1).